The chain runs to 181 residues: Large ribosomal subunit protein uL5 (181 aa).

It belongs to the universal ribosomal protein uL5 family. Part of the 50S ribosomal subunit; part of the 5S rRNA/L5/L18/L25 subcomplex. Contacts the 5S rRNA and the P site tRNA. Forms a bridge to the 30S subunit in the 70S ribosome.

This is one of the proteins that bind and probably mediate the attachment of the 5S RNA into the large ribosomal subunit, where it forms part of the central protuberance. In the 70S ribosome it contacts protein S13 of the 30S subunit (bridge B1b), connecting the 2 subunits; this bridge is implicated in subunit movement. Contacts the P site tRNA; the 5S rRNA and some of its associated proteins might help stabilize positioning of ribosome-bound tRNAs. This is Large ribosomal subunit protein uL5 from Nitrosococcus oceani (strain ATCC 19707 / BCRC 17464 / JCM 30415 / NCIMB 11848 / C-107).